A 389-amino-acid polypeptide reads, in one-letter code: Acetate kinase (389 aa).

Mg(2+) is bound at residue N7. K14 is an ATP binding site. R88 provides a ligand contact to substrate. Catalysis depends on D145, which acts as the Proton donor/acceptor. Residues 205-209, 279-281, and 324-328 contribute to the ATP site; these read HLGNG, DLR, and GIGEN. E375 lines the Mg(2+) pocket.

The protein belongs to the acetokinase family. As to quaternary structure, homodimer. Mg(2+) serves as cofactor. Requires Mn(2+) as cofactor.

The protein localises to the cytoplasm. It catalyses the reaction acetate + ATP = acetyl phosphate + ADP. It participates in metabolic intermediate biosynthesis; acetyl-CoA biosynthesis; acetyl-CoA from acetate: step 1/2. Its function is as follows. Catalyzes the formation of acetyl phosphate from acetate and ATP. Can also catalyze the reverse reaction. The polypeptide is Acetate kinase (Sulfurimonas denitrificans (strain ATCC 33889 / DSM 1251) (Thiomicrospira denitrificans (strain ATCC 33889 / DSM 1251))).